Consider the following 187-residue polypeptide: MDWLTILGISVALAMDAFAVALAAGAVISPITGRHLFRLGFHFGLFQALMPIGGWLLGMTVQRWISAYDHWIAFGLLVFVGGRMVHEAFEDDEDKTPSDPTKGMTMVMLSVATSIDAFAVGLSIAMLGVSVWLPATVIGLVAGVLTVAGMLMGRRLGEKWGKRVEICGGLVLCLIGLKILLEHTLLK.

6 helical membrane passes run 3 to 23 (WLTI…VALA), 39 to 59 (LGFH…LLGM), 65 to 85 (ISAY…GRMV), 103 to 123 (GMTM…VGLS), 124 to 144 (IAML…VAGV), and 166 to 186 (ICGG…HTLL).

This sequence belongs to the MntP (TC 9.B.29) family.

The protein localises to the cell inner membrane. Its function is as follows. Probably functions as a manganese efflux pump. This is Putative manganese efflux pump MntP from Geobacter sp. (strain M21).